A 4080-amino-acid chain; its full sequence is Hybrid PKS-NRPS synthetase poxE (4080 aa).

The Ketosynthase family 3 (KS3) domain occupies 8–442 (REPIAIVGSG…GTNAHAIIEA (435 aa)). Catalysis depends on for beta-ketoacyl synthase activity residues Cys181, His320, and His362. The malonyl-CoA:ACP transacylase (MAT) domain stretch occupies residues 554 to 878 (VFTGQGAQWA…QRGMNDVEAM (325 aa)). The tract at residues 944-1078 (HPILGTRCPD…GRLVITYGPV (135 aa)) is N-terminal hotdog fold. Positions 944–1246 (HPILGTRCPD…AVPLEATNAD (303 aa)) constitute a PKS/mFAS DH domain. The tract at residues 945–1243 (PILGTRCPDG…GIHAVPLEAT (299 aa)) is dehydratase (DH) domain. The active-site Proton acceptor; for dehydratase activity is His976. The tract at residues 1093–1246 (MVDVPSERFY…AVPLEATNAD (154 aa)) is C-terminal hotdog fold. Catalysis depends on Asp1152, which acts as the Proton donor; for dehydratase activity. The segment at 1400–1585 (HFSDYLASVV…GVDTFTSDAD (186 aa)) is methyltransferase (MT) domain. The ketoreductase (KR)domain stretch occupies residues 2118–2292 (TYWLVGLTGS…AGSVMNIGAI (175 aa)). Residues 2399-2478 (TTDEIYEVIK…TIGEIIKFVL (80 aa)) are peptidyl carrier protein. In terms of domain architecture, Carrier 1 spans 2405-2481 (EVIKECFIVK…EIIKFVLEKL (77 aa)). An O-(pantetheine 4'-phosphoryl)serine modification is found at Ser2441. The interval 2488 to 2569 (SLGLSPPTGA…AASPSIHTEE (82 aa)) is disordered. Residues 2511-2525 (VVVERRNVPRLEKKI) show a composition bias toward basic and acidic residues. The segment covering 2528 to 2545 (SAGSRTSSSVTGTSKSVS) has biased composition (low complexity). The segment covering 2551–2565 (DTASSQTSEAASPSI) has biased composition (polar residues). The interval 2607–3036 (KEPLSFGQSR…DSKQPGGHVS (430 aa)) is condensation. An adenylation region spans residues 3069–3478 (DMAKQYPQKL…DGRLRIEGRI (410 aa)). Residues 3593 to 3673 (AHLNEAQAQM…KMALLIKPQE (81 aa)) form the Carrier 2 domain. The thiolation stretch occupies residues 3598-3670 (AQAQMVQLWE…TLEKMALLIK (73 aa)). Ser3633 carries the O-(pantetheine 4'-phosphoryl)serine modification. The tract at residues 3740-3959 (LTGATGFIGQ…DFVPVEQVVR (220 aa)) is reductase (RED) domain.

It in the C-terminal section; belongs to the NRP synthetase family.

The protein operates within secondary metabolite biosynthesis. Hybrid PKS-NRPS synthetase; part of the gene cluster that mediates the biosynthesis of oxaleimides, cytotoxic compounds containing an unusual disubstituted succinimide moiety. The first step of the pathway is provided by the HR-PKS poxF that serves in a new mode of collaborative biosynthesis with the PKS-NRPS poxE, by providing the olefin containing amino acid substrate via the synthesis of an ACP-bound dec-4-enoate. The cytochrome P450 monooxygenase poxM-catalyzed oxidation at the alpha-position creates the enzyme-bound 2-hydroxydec-4-enoyl-ACP thioester, which may be prone to spontaneous hydrolysis to yield 2-hydroxydec-4-enoic acid due to increased electrophilicity of the carbonyl. 2-hydroxydec-4-enoic acid can then be further oxidized by poxM to yield the alpha-ketoacid 2-oxodec-4-enoicacid, which is reductively aminated by the aminotransferase poxL to yield (S,E)-2-aminodec-4-enoic acid. The Hybrid PKS-NRPS synthetase poxE then performs condensation between the octaketide product of its PKS modules and the amino group of (S,E)-2-aminodec-4-enoic acid which is activated and incorporated by the adenylation domain. The resulting aminoacyl product can be cyclized by the Diels-Alderase PoxQ and reductively released by the reductive (R) domain of poxE to yield an aldehyde intermediate. The released aldehyde is then substrate for a Knoevenagel condensation by the hydrolyase poxO followed by an oxidation at the 5-position of the pyrrolidone ring. The presence of the olefin from the amino acid building block allows for migration of the substituted allyl group to occur. This allylic transposition reaction takes place in a conjugate addition, semipinacol-like fashion to yield a succinimide intermediate. Iterative two-electron oxidations of the C7 methyl of the succinimide intermediate to the carboxylic acid can be catalyzed by one of two remaining cytochrome P450 monooxygenasess poxC or poxD to yield oxaleimide A. Subsequent oxidation yields the maleimide scaffold oxaleimide I. Both oxaleimide A and oxaleimide I can undergo oxidative modifications in the decalin ring to yield the series of products oxaleimides B to H. This Penicillium oxalicum (strain 114-2 / CGMCC 5302) (Penicillium decumbens) protein is Hybrid PKS-NRPS synthetase poxE.